The chain runs to 131 residues: Glycine cleavage system H protein (131 aa).

Positions 24 to 106 (RVTVGISDHA…YGEGWMFVVE (83 aa)) constitute a Lipoyl-binding domain. At Lys-65 the chain carries N6-lipoyllysine.

It belongs to the GcvH family. As to quaternary structure, the glycine cleavage system is composed of four proteins: P, T, L and H. It depends on (R)-lipoate as a cofactor.

In terms of biological role, the glycine cleavage system catalyzes the degradation of glycine. The H protein shuttles the methylamine group of glycine from the P protein to the T protein. The protein is Glycine cleavage system H protein of Stenotrophomonas maltophilia (strain K279a).